Reading from the N-terminus, the 119-residue chain is Large ribosomal subunit protein bL20 (119 aa).

Belongs to the bacterial ribosomal protein bL20 family.

Binds directly to 23S ribosomal RNA and is necessary for the in vitro assembly process of the 50S ribosomal subunit. It is not involved in the protein synthesizing functions of that subunit. This chain is Large ribosomal subunit protein bL20, found in Xanthomonas oryzae pv. oryzae (strain PXO99A).